The primary structure comprises 66 residues: Large ribosomal subunit protein bL31 (66 aa).

Zn(2+) is bound by residues C16, C18, C36, and C39.

Belongs to the bacterial ribosomal protein bL31 family. Type A subfamily. As to quaternary structure, part of the 50S ribosomal subunit. Zn(2+) is required as a cofactor.

Functionally, binds the 23S rRNA. This is Large ribosomal subunit protein bL31 from Campylobacter lari (strain RM2100 / D67 / ATCC BAA-1060).